Here is a 139-residue protein sequence, read N- to C-terminus: MAMTVHCDIVSAEGEIFSGLVEMVVAHGNLGDLGIAPGHAPLITNLKPGPITLTKQGGAHEVFYISGGFLEVQPNMVKVLADTVQRAADLDEAQAQEALKAAENALNLKGADFDYGAAAARLAEAAAQLRTVQQMRKGK.

It belongs to the ATPase epsilon chain family. As to quaternary structure, F-type ATPases have 2 components, CF(1) - the catalytic core - and CF(0) - the membrane proton channel. CF(1) has five subunits: alpha(3), beta(3), gamma(1), delta(1), epsilon(1). CF(0) has three main subunits: a, b and c.

The protein resides in the cell inner membrane. Its function is as follows. Produces ATP from ADP in the presence of a proton gradient across the membrane. In Pseudomonas putida (strain ATCC 47054 / DSM 6125 / CFBP 8728 / NCIMB 11950 / KT2440), this protein is ATP synthase epsilon chain.